The following is a 123-amino-acid chain: Small ribosomal subunit protein uS12 (123 aa).

At D89 the chain carries 3-methylthioaspartic acid.

The protein belongs to the universal ribosomal protein uS12 family. In terms of assembly, part of the 30S ribosomal subunit. Contacts proteins S8 and S17. May interact with IF1 in the 30S initiation complex.

In terms of biological role, with S4 and S5 plays an important role in translational accuracy. Its function is as follows. Interacts with and stabilizes bases of the 16S rRNA that are involved in tRNA selection in the A site and with the mRNA backbone. Located at the interface of the 30S and 50S subunits, it traverses the body of the 30S subunit contacting proteins on the other side and probably holding the rRNA structure together. The combined cluster of proteins S8, S12 and S17 appears to hold together the shoulder and platform of the 30S subunit. The chain is Small ribosomal subunit protein uS12 from Rhizobium meliloti (strain 1021) (Ensifer meliloti).